Reading from the N-terminus, the 427-residue chain is UPF0229 protein YeaH (427 aa).

Residues 79–90 (NDHFVQNDRIER) show a composition bias toward basic and acidic residues. Residues 79–110 (NDHFVQNDRIERPQGGGGGSGSGQGQASQDGE) form a disordered region. Residues 92 to 102 (QGGGGGSGSGQ) show a composition bias toward gly residues.

The protein belongs to the UPF0229 family.

This is UPF0229 protein YeaH from Escherichia coli O9:H4 (strain HS).